A 249-amino-acid polypeptide reads, in one-letter code: Isoprenyl transferase (249 aa).

Residue Asp25 is part of the active site. Asp25 contributes to the Mg(2+) binding site. Substrate contacts are provided by residues 26-29 (GNGR), Trp30, Arg38, His42, and 70-72 (STE). Residue Asn73 is the Proton acceptor of the active site. Substrate-binding positions include Trp74, Arg76, Arg197, and 203–205 (RLS). Glu216 is a Mg(2+) binding site.

Belongs to the UPP synthase family. As to quaternary structure, homodimer. Mg(2+) serves as cofactor.

In terms of biological role, catalyzes the condensation of isopentenyl diphosphate (IPP) with allylic pyrophosphates generating different type of terpenoids. The chain is Isoprenyl transferase from Streptococcus mutans serotype c (strain ATCC 700610 / UA159).